Consider the following 361-residue polypeptide: MKFGWIKTTGTDSEERMDSVKDALESSIPGIIAEKDEISSVRELGNIKIVSDSLDADVVLINKGEDLEILKSAKLSGKETAVYVVINTKDDEVYATEVSKLDFVDYIVLEGSDWTIIPLENIIADLFGEEIKIVSVVTSVKDAEAAYEILEKGVDGVVLIPNDINEVKDFSKLIERMNSESVKLDYATVTKIEPVGSGDRVCIDTCSMMEMGEGMLIGSYSRGMFLVHSETVENPYVATRPFRVNAGPVHAYILCPENKTKYLSDLKAGDKVLVVNKNGETRESIIGRVKIEKRPLFLVEAEYNGENLRTILQNAETIRLVGEDGKPVSVVDLKVGTKVLIKPDENARHFGMAIKETIIEK.

This sequence belongs to the archaeal-type DHQ synthase family.

It catalyses the reaction 2-amino-2,3,7-trideoxy-D-lyxo-hept-6-ulosonate + NAD(+) + H2O = 3-dehydroquinate + NH4(+) + NADH + H(+). Its function is as follows. Catalyzes the oxidative deamination and cyclization of 2-amino-3,7-dideoxy-D-threo-hept-6-ulosonic acid (ADH) to yield 3-dehydroquinate (DHQ), which is fed into the canonical shikimic pathway of aromatic amino acid biosynthesis. The sequence is that of 3-dehydroquinate synthase from Methanococcus maripaludis (strain C6 / ATCC BAA-1332).